Reading from the N-terminus, the 133-residue chain is Large ribosomal subunit protein bL19 (133 aa).

This sequence belongs to the bacterial ribosomal protein bL19 family.

This protein is located at the 30S-50S ribosomal subunit interface and may play a role in the structure and function of the aminoacyl-tRNA binding site. The polypeptide is Large ribosomal subunit protein bL19 (Stenotrophomonas maltophilia (strain R551-3)).